Here is a 231-residue protein sequence, read N- to C-terminus: Large ribosomal subunit protein uL1 (231 aa).

It belongs to the universal ribosomal protein uL1 family. In terms of assembly, part of the 50S ribosomal subunit.

Binds directly to 23S rRNA. The L1 stalk is quite mobile in the ribosome, and is involved in E site tRNA release. Its function is as follows. Protein L1 is also a translational repressor protein, it controls the translation of the L11 operon by binding to its mRNA. The sequence is that of Large ribosomal subunit protein uL1 from Pseudomonas syringae pv. syringae (strain B728a).